Here is a 120-residue protein sequence, read N- to C-terminus: Small ribosomal subunit protein uS13 (120 aa).

Residues 93–120 (RRGLPCRGQKTKTNARTRKGKRKTVGAA) are disordered.

Belongs to the universal ribosomal protein uS13 family. In terms of assembly, part of the 30S ribosomal subunit. Forms a loose heterodimer with protein S19. Forms two bridges to the 50S subunit in the 70S ribosome.

Its function is as follows. Located at the top of the head of the 30S subunit, it contacts several helices of the 16S rRNA. In the 70S ribosome it contacts the 23S rRNA (bridge B1a) and protein L5 of the 50S subunit (bridge B1b), connecting the 2 subunits; these bridges are implicated in subunit movement. Contacts the tRNAs in the A and P-sites. This is Small ribosomal subunit protein uS13 from Sulfurimonas denitrificans (strain ATCC 33889 / DSM 1251) (Thiomicrospira denitrificans (strain ATCC 33889 / DSM 1251)).